Here is a 1401-residue protein sequence, read N- to C-terminus: DNA-directed RNA polymerase subunit beta' (1401 aa).

Zn(2+)-binding residues include cysteine 70, cysteine 72, cysteine 85, and cysteine 88. Positions 460, 462, and 464 each coordinate Mg(2+). Residues cysteine 808, cysteine 882, cysteine 889, and cysteine 892 each coordinate Zn(2+).

It belongs to the RNA polymerase beta' chain family. In terms of assembly, the RNAP catalytic core consists of 2 alpha, 1 beta, 1 beta' and 1 omega subunit. When a sigma factor is associated with the core the holoenzyme is formed, which can initiate transcription. Requires Mg(2+) as cofactor. The cofactor is Zn(2+).

The catalysed reaction is RNA(n) + a ribonucleoside 5'-triphosphate = RNA(n+1) + diphosphate. Its function is as follows. DNA-dependent RNA polymerase catalyzes the transcription of DNA into RNA using the four ribonucleoside triphosphates as substrates. The protein is DNA-directed RNA polymerase subunit beta' of Legionella pneumophila (strain Paris).